A 920-amino-acid chain; its full sequence is Sensor histidine kinase SsrA (920 aa).

The Cytoplasmic portion of the chain corresponds to 1 to 19 (MNLLNLKNTLQTSLVIRLT). The helical transmembrane segment at 20–40 (FLFLLTTIIIWLLSVLTAAYI) threads the bilayer. Residues 41–291 (SMVQKRQHII…YGNLHNRILK (251 aa)) are Periplasmic-facing. Residues 292 to 312 (IILQQIPFTLTALVLMTSAFC) form a helical membrane-spanning segment. The Cytoplasmic portion of the chain corresponds to 313–920 (WLLHRSLAKP…RMIFKNYTIT (608 aa)). The 53-residue stretch at 317–369 (RSLAKPLWRFVDVINKTATAPLSTRLPAQRLDELDSIAGAFNQLLDTLQVQYD) folds into the HAMP domain. A coiled-coil region spans residues 354-395 (AGAFNQLLDTLQVQYDNLENKVAERTQALNEAKKRAERANKR). In terms of domain architecture, Histidine kinase spans 402–614 (VISHELRTPM…CVSLVLPLQE (213 aa)). Positions 405 and 549 each coordinate ATP. At His405 the chain carries Phosphohistidine; by autocatalysis. The region spanning 690 to 808 (QILLVDDADI…TLARYISIAA (119 aa)) is the Response regulatory domain. Asp739 carries the post-translational modification 4-aspartylphosphate.

In terms of processing, autophosphorylated.

Its subcellular location is the cell inner membrane. It catalyses the reaction ATP + protein L-histidine = ADP + protein N-phospho-L-histidine.. Its function is as follows. Member of the two-component regulatory system SsrA/SsrB (SpiR/SsrB) that is required for intracellular proliferation and systemic dissemination within the host. When inside acidic Salmonella-containing vesicles (SCV) within host cells the SsrA sensor kinase autophosphorylates and the phosphoryl group is transferred to the response regulator SsrB; phosphorylated SsrB activates the expression of genes encoding virulence proteins, including pathogenicity island 2 (SPI2) and other horizontally acquired genes, and antagonizes the action of transcriptional repressor hns (H-NS). The chain is Sensor histidine kinase SsrA from Salmonella typhimurium (strain LT2 / SGSC1412 / ATCC 700720).